The following is a 341-amino-acid chain: THO complex subunit 6 homolog (341 aa).

WD repeat units lie at residues 22–61, 74–112, 124–165, 166–205, 215–254, 256–293, and 295–339; these read RLHM…SSEA, AHDG…GCKE, LEVP…RALR, GHTD…EVQT, SRPH…PTTV, PIRA…KAQV, and GSSP…AFSL. A Phosphoserine modification is found at Ser180.

The protein belongs to the WD repeat THOC6 family. Component of the THO subcomplex, which is composed of THOC1, THOC2, THOC3, THOC5, THOC6 and THOC7. The THO subcomplex interacts with DDX39B to form the THO-DDX39B complex which multimerizes into a 28-subunit tetrameric assembly. Component of the transcription/export (TREX) complex at least composed of ALYREF/THOC4, DDX39B, SARNP/CIP29, CHTOP and the THO subcomplex; in the complex interacts with THOC5; together with THOC5 and THOC7, plays a key structural role in the oligomerization of the THO-DDX39B complex. TREX seems to have a dynamic structure involving ATP-dependent remodeling.

Its subcellular location is the nucleus. It is found in the nucleus speckle. Its function is as follows. Component of the THO subcomplex of the TREX complex which is thought to couple mRNA transcription, processing and nuclear export, and which specifically associates with spliced mRNA and not with unspliced pre-mRNA. Plays a key structural role in the oligomerization of the THO-DDX39B complex. TREX is recruited to spliced mRNAs by a transcription-independent mechanism, binds to mRNA upstream of the exon-junction complex (EJC) and is recruited in a splicing- and cap-dependent manner to a region near the 5' end of the mRNA where it functions in mRNA export to the cytoplasm via the TAP/NXF1 pathway. Plays a role in apoptosis negative control involved in brain development. In Mus musculus (Mouse), this protein is THO complex subunit 6 homolog (Thoc6).